A 336-amino-acid chain; its full sequence is MIKEAIYQLVNKEDLSYEVAEQVMDEIMSGEASNVLIGSYLTALRMKGETIDEITASAAGMRKHCVRLLHNMDVLEIVGTGGDEANTFNISTTTGFVVSAAGIPVAKHGNRCVSSKCGAADVLEALGVNIMLAPLESAKILEEMGLCFMFAQTYHSAMKFVAPVRRELGIRTIFNILGPLANPAGANLELLGVYEEALVKPLARVLLKLGVKRGMVVYGRDGLDEISLSHQTVCCKIRDGKLYDYILEPEQIGLTKCKKEDLVGGSPAENAAITRAILNGEKGPKRDAVIFNAAACIYMVRDDITLQEAAKIATDIIDSKKAIHQLDKFIELSNRR.

Residues glycine 79, 82 to 83 (GD), threonine 87, 89 to 92 (NIST), 107 to 115 (KHGNRCVSS), and alanine 119 contribute to the 5-phospho-alpha-D-ribose 1-diphosphate site. Position 79 (glycine 79) interacts with anthranilate. Position 91 (serine 91) interacts with Mg(2+). Asparagine 110 contributes to the anthranilate binding site. Arginine 165 is a binding site for anthranilate. Mg(2+) is bound by residues aspartate 224 and glutamate 225.

It belongs to the anthranilate phosphoribosyltransferase family. As to quaternary structure, homodimer. The cofactor is Mg(2+).

It carries out the reaction N-(5-phospho-beta-D-ribosyl)anthranilate + diphosphate = 5-phospho-alpha-D-ribose 1-diphosphate + anthranilate. It participates in amino-acid biosynthesis; L-tryptophan biosynthesis; L-tryptophan from chorismate: step 2/5. Its function is as follows. Catalyzes the transfer of the phosphoribosyl group of 5-phosphorylribose-1-pyrophosphate (PRPP) to anthranilate to yield N-(5'-phosphoribosyl)-anthranilate (PRA). The sequence is that of Anthranilate phosphoribosyltransferase from Lachnoclostridium phytofermentans (strain ATCC 700394 / DSM 18823 / ISDg) (Clostridium phytofermentans).